A 112-amino-acid polypeptide reads, in one-letter code: Ig kappa chain V-II region 2S1.3 (112 aa).

Residues 1–23 form a framework-1 region; that stretch reads DIVMTQAAFSNPVTLGTSASFSC. Cys23 and Cys93 are disulfide-bonded. Positions 24–39 are complementarity-determining-1; the sequence is RSSKSLQQSKGITYLY. Residues 40–54 are framework-2; the sequence is WYLQKPGQSPQLLIY. Residues 55-61 form a complementarity-determining-2 region; the sequence is QMSNLAS. The framework-3 stretch occupies residues 62 to 93; that stretch reads GVPDRFSGSGSGTDFTLRISRVEAEDVGVYYC. Positions 94–102 are complementarity-determining-3; sequence ANLQELPYT. The segment at 103–112 is framework-4; sequence FGGGTKLEIK.

This is Ig kappa chain V-II region 2S1.3 from Mus musculus (Mouse).